Consider the following 30-residue polypeptide: Circulin-E (30 aa).

Positions 1–30 (KIPCGESCVWIPCLTSVFNCKCENKVCYHD) form a cross-link, cyclopeptide (Lys-Asp). 3 disulfides stabilise this stretch: Cys-4–Cys-20, Cys-8–Cys-22, and Cys-13–Cys-27.

Post-translationally, this is a cyclic peptide.

Functionally, probably participates in a plant defense mechanism. Inhibits the cytopathic effects of the human immunodeficiency virus. This is Circulin-E from Chassalia parviflora.